The chain runs to 499 residues: Cytochrome P450 ARB_01131 (499 aa).

The first 21 residues, 1–21 (MLSLIVACLVLPLICYKLVRS), serve as a signal peptide directing secretion. N-linked (GlcNAc...) asparagine glycosylation is present at Asn-23. Cys-437 lines the heme pocket.

It belongs to the cytochrome P450 family. Requires heme as cofactor.

In terms of biological role, together with an NADPH cytochrome P450 the enzyme system catalyzes the terminal hydroxylation as the first step in the assimilation of alkanes and fatty acids. In Arthroderma benhamiae (strain ATCC MYA-4681 / CBS 112371) (Trichophyton mentagrophytes), this protein is Cytochrome P450 ARB_01131.